We begin with the raw amino-acid sequence, 388 residues long: Alanine racemase (388 aa).

The active-site Proton acceptor; specific for D-alanine is the Lys39. An N6-(pyridoxal phosphate)lysine modification is found at Lys39. At Lys129 the chain carries N6-carboxylysine. A substrate-binding site is contributed by Arg136. Catalysis depends on Tyr265, which acts as the Proton acceptor; specific for L-alanine. Residue Met312 participates in substrate binding.

It belongs to the alanine racemase family. As to quaternary structure, homodimer. Requires pyridoxal 5'-phosphate as cofactor.

The enzyme catalyses L-alanine = D-alanine. It functions in the pathway amino-acid biosynthesis; D-alanine biosynthesis; D-alanine from L-alanine: step 1/1. With respect to regulation, inhibited by acetate and propionate. Irreversibly inhibited by cycloserine. Functionally, catalyzes the interconversion of L-alanine and D-alanine. Also weakly active on serine. In Geobacillus stearothermophilus (Bacillus stearothermophilus), this protein is Alanine racemase (alr).